The primary structure comprises 290 residues: MGKGLALDIGGTKIAAAVVTESGMLIGRQQIATPRGGAGQLAAALETLIAPYRHQVDFIAVASTGIISGGRLTALNPANLGGLADFPLYDCIRSISDLPCVLLNDGQAAAWAEYQALGDKNDNMMFVTVSTGVGGGIILNKKLLVGQRGLAGHIGHTLSDPHGVLCGCGRRGCVESVASGTAIGAETLGWKQPVSAATVFDMAQQGDAQAGKVINRSAAAIAQMLADMKMALDLEVVILGGSVGLAVGYLERVVAAQKTLPGIYRVPVQEAHHRQDSGLLGAALWARASL.

Residues 6-13 (ALDIGGTK) and 132-139 (GVGGGIIL) each bind ATP. Zn(2+) is bound by residues histidine 156, cysteine 166, cysteine 168, and cysteine 173.

The protein belongs to the ROK (NagC/XylR) family. NanK subfamily. In terms of assembly, homodimer.

The enzyme catalyses an N-acyl-D-mannosamine + ATP = an N-acyl-D-mannosamine 6-phosphate + ADP + H(+). It participates in amino-sugar metabolism; N-acetylneuraminate degradation; D-fructose 6-phosphate from N-acetylneuraminate: step 2/5. Functionally, catalyzes the phosphorylation of N-acetylmannosamine (ManNAc) to ManNAc-6-P. The sequence is that of N-acetylmannosamine kinase from Yersinia pseudotuberculosis serotype O:3 (strain YPIII).